The following is a 530-amino-acid chain: Histone-arginine methyltransferase CARMER (530 aa).

An SAM-dependent MTase PRMT-type domain is found at 141 to 450 (ASQYFQFYGY…QSYDVTIDLH (310 aa)). Residues glutamine 154, arginine 163, glycine 187, glutamate 209, glutamate 238, and threonine 266 each coordinate S-adenosyl-L-methionine. Position 501 is an asymmetric dimethylarginine; by autocatalysis (arginine 501).

This sequence belongs to the class I-like SAM-binding methyltransferase superfamily. Protein arginine N-methyltransferase family. As to quaternary structure, homodimer. The dimethylated protein is the major form.

The protein localises to the cytoplasm. It localises to the nucleus. It catalyses the reaction L-arginyl-[protein] + 2 S-adenosyl-L-methionine = N(omega),N(omega)-dimethyl-L-arginyl-[protein] + 2 S-adenosyl-L-homocysteine + 2 H(+). In terms of biological role, methylates (mono- and asymmetric dimethylation) the guanidino nitrogens of arginyl residues in proteins. May methylate histone H3 at 'Arg-17' and activate transcription via chromatin remodeling. This Drosophila yakuba (Fruit fly) protein is Histone-arginine methyltransferase CARMER (Art4).